The primary structure comprises 356 residues: L-lactate dehydrogenase A (356 aa).

NAD(+) contacts are provided by residues 75–80 (DALPDK) and R121. Positions 128, 160, and 191 each coordinate substrate. N160 is an NAD(+) binding site. H215 (proton acceptor) is an active-site residue. Position 270 (T270) interacts with substrate.

Belongs to the LDH/MDH superfamily. LDH family. In terms of assembly, tetramer that arise from random association of LDH-A and LDH-B.

The catalysed reaction is (S)-lactate + NAD(+) = pyruvate + NADH + H(+). It functions in the pathway fermentation; pyruvate fermentation to lactate; (S)-lactate from pyruvate: step 1/1. The chain is L-lactate dehydrogenase A from Hordeum vulgare (Barley).